The primary structure comprises 224 residues: Transcriptional regulatory protein TctD (224 aa).

In terms of domain architecture, Response regulatory spans 2–116 (RLLLAEDNRE…ELDARLRALL (115 aa)). The residue at position 51 (aspartate 51) is a 4-aspartylphosphate. A DNA-binding region (ompR/PhoB-type) is located at residues 121 to 219 (GQVHEVQQLG…LRGLGYVLER (99 aa)).

Its function is as follows. Transcriptional activator of the tctI tricarboxylate transport system operon. In Salmonella typhimurium (strain SL1344), this protein is Transcriptional regulatory protein TctD (tctD).